We begin with the raw amino-acid sequence, 251 residues long: Mediator of RNA polymerase II transcription subunit 7 (251 aa).

The segment at 1 to 38 (MLPGFGAQTVSPFPNPPEYASAYTSDRINNGSAPPPPH) is disordered. Positions 22 to 32 (AYTSDRINNGS) are enriched in polar residues.

Belongs to the Mediator complex subunit 7 family. In terms of assembly, component of the Mediator complex. Interacts with mdt-10 and mdt-21. Interacts with RNA polymerase II.

It is found in the nucleus. Functionally, component of the Mediator complex, a coactivator involved in the regulated transcription of nearly all RNA polymerase II-dependent genes. Mediator functions as a bridge to convey information from gene-specific regulatory proteins to the basal RNA polymerase II transcription machinery. Mediator is recruited to promoters by direct interactions with regulatory proteins and serves as a scaffold for the assembly of a functional preinitiation complex with RNA polymerase II and the general transcription factors. Required for germ cell development and gonadal growth. The sequence is that of Mediator of RNA polymerase II transcription subunit 7 (let-49) from Caenorhabditis elegans.